The sequence spans 627 residues: 1-deoxy-D-xylulose-5-phosphate synthase (627 aa).

Residues H80 and 121–123 contribute to the thiamine diphosphate site; that span reads GHS. Residue D152 coordinates Mg(2+). Residues 153-154, N181, Y288, and E370 each bind thiamine diphosphate; that span reads GA. Residue N181 coordinates Mg(2+).

This sequence belongs to the transketolase family. DXPS subfamily. Homodimer. Mg(2+) is required as a cofactor. Thiamine diphosphate serves as cofactor.

The enzyme catalyses D-glyceraldehyde 3-phosphate + pyruvate + H(+) = 1-deoxy-D-xylulose 5-phosphate + CO2. Its pathway is metabolic intermediate biosynthesis; 1-deoxy-D-xylulose 5-phosphate biosynthesis; 1-deoxy-D-xylulose 5-phosphate from D-glyceraldehyde 3-phosphate and pyruvate: step 1/1. In terms of biological role, catalyzes the acyloin condensation reaction between C atoms 2 and 3 of pyruvate and glyceraldehyde 3-phosphate to yield 1-deoxy-D-xylulose-5-phosphate (DXP). This Aliivibrio fischeri (strain MJ11) (Vibrio fischeri) protein is 1-deoxy-D-xylulose-5-phosphate synthase.